The following is a 145-amino-acid chain: FAD synthase (145 aa).

Residues 5-6 (TF), 10-13 (HPGH), D92, and Y119 contribute to the ATP site.

This sequence belongs to the archaeal FAD synthase family. Homodimer. A divalent metal cation serves as cofactor.

It catalyses the reaction FMN + ATP + H(+) = FAD + diphosphate. It participates in cofactor biosynthesis; FAD biosynthesis; FAD from FMN: step 1/1. Its function is as follows. Catalyzes the transfer of the AMP portion of ATP to flavin mononucleotide (FMN) to produce flavin adenine dinucleotide (FAD) coenzyme. The protein is FAD synthase of Methanothermus fervidus (strain ATCC 43054 / DSM 2088 / JCM 10308 / V24 S).